A 632-amino-acid chain; its full sequence is 1-deoxy-D-xylulose-5-phosphate synthase (632 aa).

A disordered region spans residues 1–25 (MPTTFHEIPRKRPTTPLLDRANTPD). Residues H87 and 128 to 130 (GHS) each bind thiamine diphosphate. D159 contacts Mg(2+). Residues 160-161 (GA), N188, F295, and E378 contribute to the thiamine diphosphate site. Mg(2+) is bound at residue N188.

It belongs to the transketolase family. DXPS subfamily. In terms of assembly, homodimer. Requires Mg(2+) as cofactor. Thiamine diphosphate serves as cofactor.

The enzyme catalyses D-glyceraldehyde 3-phosphate + pyruvate + H(+) = 1-deoxy-D-xylulose 5-phosphate + CO2. It functions in the pathway metabolic intermediate biosynthesis; 1-deoxy-D-xylulose 5-phosphate biosynthesis; 1-deoxy-D-xylulose 5-phosphate from D-glyceraldehyde 3-phosphate and pyruvate: step 1/1. Functionally, catalyzes the acyloin condensation reaction between C atoms 2 and 3 of pyruvate and glyceraldehyde 3-phosphate to yield 1-deoxy-D-xylulose-5-phosphate (DXP). The protein is 1-deoxy-D-xylulose-5-phosphate synthase of Pseudomonas fluorescens (strain Pf0-1).